Reading from the N-terminus, the 431-residue chain is Probable carboxylic ester hydrolase LipM (431 aa).

3 consecutive transmembrane segments (helical) span residues 7-27 (IHVI…AATI), 38-58 (FASL…LPTL), and 75-95 (PVRA…LNLS). Active-site residues include S261, D357, and H390.

This sequence belongs to the 'GDXG' lipolytic enzyme family.

Its subcellular location is the membrane. The protein is Probable carboxylic ester hydrolase LipM of Mycobacterium tuberculosis (strain ATCC 25618 / H37Rv).